A 215-amino-acid polypeptide reads, in one-letter code: Proteasome subunit beta inpE (215 aa).

It belongs to the peptidase T1B family.

Its subcellular location is the cytoplasm. It is found in the nucleus. The enzyme catalyses Cleavage of peptide bonds with very broad specificity.. Functionally, proteasome subunit beta type-6; part of the inp gene cluster that mediates the biosynthesis of fellutamide B, a mycotoxin that acts as a proteasome inhibitor. In the first step of fellutabmide B biosynthesis inpC activates 3-hydroxydodecanoic acid to generate 3-hydroxydodecanoyl-AMP that is then loaded onto the T0 domain of inpB. The 3-hydroxydodecanoyl-S-phosphopantetheinyl-T0 is sequentially extended with L-Asn and L-Gln by the two CAT modules of inpB. The linear lipodipeptide from inpB is then transferred onto inpA for the addition of the third amino acid, L-Leu. Reductive releasing of the lipotripeptide by the TE domain of inpA produces (2S)-fellutamide B. InpF might be involved in the release and transfer of the lipodipeptide from inpB to inpA. The inp cluster-encoded proteasome subunit inpE confers resistance to internally produced fellutamides. The MFS efflux transporter inpD may contribute to fellutamide resistance as well. The chain is Proteasome subunit beta inpE (inpE) from Emericella nidulans (strain FGSC A4 / ATCC 38163 / CBS 112.46 / NRRL 194 / M139) (Aspergillus nidulans).